The sequence spans 271 residues: Glutamate racemase (271 aa).

Substrate-binding positions include 10–11 and 42–43; these read DS and YG. Residue Cys73 is the Proton donor/acceptor of the active site. 74-75 provides a ligand contact to substrate; that stretch reads NT. Cys183 functions as the Proton donor/acceptor in the catalytic mechanism. Position 184–185 (184–185) interacts with substrate; it reads TH.

The protein belongs to the aspartate/glutamate racemases family.

It catalyses the reaction L-glutamate = D-glutamate. It participates in cell wall biogenesis; peptidoglycan biosynthesis. Provides the (R)-glutamate required for cell wall biosynthesis. The protein is Glutamate racemase of Lactococcus lactis subsp. cremoris (strain SK11).